The following is a 384-amino-acid chain: Dual-specificity RNA methyltransferase RlmN (384 aa).

The active-site Proton acceptor is E105. Residues 111–350 (EDDRATLCVS…TIVRKTRGDD (240 aa)) enclose the Radical SAM core domain. Residues C118 and C355 are joined by a disulfide bond. [4Fe-4S] cluster is bound by residues C125, C129, and C132. Residues 179 to 180 (GE), S211, 233 to 235 (SLH), and N312 each bind S-adenosyl-L-methionine. The S-methylcysteine intermediate role is filled by C355.

Belongs to the radical SAM superfamily. RlmN family. The cofactor is [4Fe-4S] cluster.

Its subcellular location is the cytoplasm. The enzyme catalyses adenosine(2503) in 23S rRNA + 2 reduced [2Fe-2S]-[ferredoxin] + 2 S-adenosyl-L-methionine = 2-methyladenosine(2503) in 23S rRNA + 5'-deoxyadenosine + L-methionine + 2 oxidized [2Fe-2S]-[ferredoxin] + S-adenosyl-L-homocysteine. It catalyses the reaction adenosine(37) in tRNA + 2 reduced [2Fe-2S]-[ferredoxin] + 2 S-adenosyl-L-methionine = 2-methyladenosine(37) in tRNA + 5'-deoxyadenosine + L-methionine + 2 oxidized [2Fe-2S]-[ferredoxin] + S-adenosyl-L-homocysteine. Specifically methylates position 2 of adenine 2503 in 23S rRNA and position 2 of adenine 37 in tRNAs. m2A2503 modification seems to play a crucial role in the proofreading step occurring at the peptidyl transferase center and thus would serve to optimize ribosomal fidelity. The protein is Dual-specificity RNA methyltransferase RlmN of Escherichia coli O6:H1 (strain CFT073 / ATCC 700928 / UPEC).